The sequence spans 358 residues: Methylthioribose-1-phosphate isomerase (358 aa).

Substrate is bound by residues 54–56 (CGA) and Gln205. Asp246 serves as the catalytic Proton donor. Substrate is bound at residue 256–257 (NQ).

Belongs to the eIF-2B alpha/beta/delta subunits family. MtnA subfamily.

It catalyses the reaction 5-(methylsulfanyl)-alpha-D-ribose 1-phosphate = 5-(methylsulfanyl)-D-ribulose 1-phosphate. The protein operates within amino-acid biosynthesis; L-methionine biosynthesis via salvage pathway; L-methionine from S-methyl-5-thio-alpha-D-ribose 1-phosphate: step 1/6. Functionally, catalyzes the interconversion of methylthioribose-1-phosphate (MTR-1-P) into methylthioribulose-1-phosphate (MTRu-1-P). This is Methylthioribose-1-phosphate isomerase from Pseudomonas fluorescens (strain ATCC BAA-477 / NRRL B-23932 / Pf-5).